The primary structure comprises 115 residues: NAD(P)H-quinone oxidoreductase subunit M (115 aa).

This sequence belongs to the complex I NdhM subunit family. NDH-1 can be composed of about 15 different subunits; different subcomplexes with different compositions have been identified which probably have different functions.

Its subcellular location is the cellular thylakoid membrane. The catalysed reaction is a plastoquinone + NADH + (n+1) H(+)(in) = a plastoquinol + NAD(+) + n H(+)(out). The enzyme catalyses a plastoquinone + NADPH + (n+1) H(+)(in) = a plastoquinol + NADP(+) + n H(+)(out). Functionally, NDH-1 shuttles electrons from an unknown electron donor, via FMN and iron-sulfur (Fe-S) centers, to quinones in the respiratory and/or the photosynthetic chain. The immediate electron acceptor for the enzyme in this species is believed to be plastoquinone. Couples the redox reaction to proton translocation, and thus conserves the redox energy in a proton gradient. Cyanobacterial NDH-1 also plays a role in inorganic carbon-concentration. The polypeptide is NAD(P)H-quinone oxidoreductase subunit M (Prochlorococcus marinus (strain MIT 9301)).